The primary structure comprises 184 residues: UPF0398 protein BC_1561 (184 aa).

It belongs to the UPF0398 family.

The polypeptide is UPF0398 protein BC_1561 (Bacillus cereus (strain ATCC 14579 / DSM 31 / CCUG 7414 / JCM 2152 / NBRC 15305 / NCIMB 9373 / NCTC 2599 / NRRL B-3711)).